Consider the following 853-residue polypeptide: Translation initiation factor IF-2 (853 aa).

Disordered regions lie at residues 1-68 (MSDT…ASDG) and 94-265 (LEQR…DKTS). The span at 20–32 (RKTSGTVKQSFSH) shows a compositional bias: polar residues. The span at 94 to 161 (LEQRKAEEAS…ASREAVERPS (68 aa)) shows a compositional bias: basic and acidic residues. The segment covering 163 to 176 (APRAAPAAQTPPAA) has biased composition (low complexity). Composition is skewed to basic and acidic residues over residues 196-219 (PARDDRADRAREVATKPSRGDAER) and 245-265 (RARERERERRVGGGDSNDKTS). The region spanning 347–515 (PRAPIVTIMG…AISIQAEILE (169 aa)) is the tr-type G domain. Residues 356–363 (GHVDHGKT) form a G1 region. 356–363 (GHVDHGKT) is a GTP binding site. Residues 381–385 (GITQH) are G2. The interval 403-406 (DTPG) is G3. Residues 403-407 (DTPGH) and 457-460 (TKSD) each bind GTP. The tract at residues 457 to 460 (TKSD) is G4. Positions 493 to 495 (SAK) are G5.

Belongs to the TRAFAC class translation factor GTPase superfamily. Classic translation factor GTPase family. IF-2 subfamily.

It is found in the cytoplasm. In terms of biological role, one of the essential components for the initiation of protein synthesis. Protects formylmethionyl-tRNA from spontaneous hydrolysis and promotes its binding to the 30S ribosomal subunits. Also involved in the hydrolysis of GTP during the formation of the 70S ribosomal complex. This Hyphomonas neptunium (strain ATCC 15444) protein is Translation initiation factor IF-2.